The following is a 328-amino-acid chain: Palmitoyltransferase ZDHHC15A (328 aa).

The Cytoplasmic portion of the chain corresponds to 1–14 (MLLPACLRRCARLL). A helical transmembrane segment spans residues 15-35 (FWIPVLVVIVVVMWSYYAYVV). Over 36-48 (HFCWILLSSATQR) the chain is Lumenal. The chain crosses the membrane as a helical span at residues 49-69 (VVFLCLFHLCFGMFSWSFWKA). Topologically, residues 70–166 (VSTPPSSPSV…NNCMGFSNYK (97 aa)) are cytoplasmic. The DHHC domain occupies 123–173 (RFCHHCQLIKPDRCHHCSVCQTCVLKMDHHCLWLNNCMGFSNYKFFMLFLL). Cysteine 125 and cysteine 128 together coordinate Zn(2+). Position 132 (lysine 132) interacts with substrate. 5 residues coordinate Zn(2+): histidine 138, cysteine 139, cysteine 142, cysteine 145, and histidine 152. Catalysis depends on cysteine 153, which acts as the S-palmitoyl cysteine intermediate. Zn(2+) is bound at residue cysteine 159. Residues 167–187 (FFMLFLLYSLLYCLLIVSTVT) traverse the membrane as a helical segment. At 188-206 (PTVIQLWRGRLFDSCVKLH) the chain is on the lumenal side. Residues 207 to 227 (VLFLTLVSAIFAITLCFLLIF) form a helical membrane-spanning segment. Over 228–328 (HIWLLTSNKT…KEAAVTIAVD (101 aa)) the chain is Cytoplasmic.

The protein belongs to the DHHC palmitoyltransferase family. In terms of processing, autopalmitoylated (in vitro).

It is found in the golgi apparatus membrane. Its subcellular location is the postsynaptic density. It carries out the reaction L-cysteinyl-[protein] + hexadecanoyl-CoA = S-hexadecanoyl-L-cysteinyl-[protein] + CoA. The enzyme catalyses L-cysteinyl-[protein] + tetradecanoyl-CoA = S-tetradecanoyl-L-cysteinyl-[protein] + CoA. The catalysed reaction is L-cysteinyl-[protein] + octadecanoyl-CoA = S-octadecanoyl-L-cysteinyl-[protein] + CoA. Its function is as follows. Palmitoyltransferase that catalyzes the addition of palmitate onto various protein substrates. Has no stringent fatty acid selectivity and in addition to palmitate can also transfer onto target proteins myristate from tetradecanoyl-CoA and stearate from octadecanoyl-CoA. May thereby regulate target proteins association and localization to membranes. The chain is Palmitoyltransferase ZDHHC15A (zdhhc15a) from Danio rerio (Zebrafish).